The chain runs to 337 residues: MFAGIFLRMGAALRSMYVNSKYEEVREEWEEDYSPQRFSYKALYKATKGFKESELFGTEANGTVYKGKLSSNAQIAVKRVSLDAEQDTKHLVSQIVGIGKLRHKNLVQLLGYCRRKGELLLVYDYMPYGNLDDFLFNEERPNLSWSQRFHIIKGVASALLYLHEQIVLHRDVKAANVLLDEDLNGRLDYGLARFGTNRNPMLGSVGYVAPELIITGMPTTKADVYSFGALLLEFACGRMFIEYPGKPEEFNLISWVCQCWKRGNLVGARDARLEGDYVCKEIEMVLKLGLLCAQYNPEDRPSMSQVVNYLEGNDVLPEMPPDTPGISIPTPYHEVLA.

In terms of domain architecture, Protein kinase spans 50–316 (FKESELFGTE…VNYLEGNDVL (267 aa)). Residues 56–64 (FGTEANGTV) and Lys78 contribute to the ATP site. Tyr123 is modified (phosphotyrosine). Asp171 (proton acceptor) is an active-site residue.

The protein belongs to the protein kinase superfamily. Ser/Thr protein kinase family.

The catalysed reaction is L-seryl-[protein] + ATP = O-phospho-L-seryl-[protein] + ADP + H(+). It catalyses the reaction L-threonyl-[protein] + ATP = O-phospho-L-threonyl-[protein] + ADP + H(+). This Arabidopsis thaliana (Mouse-ear cress) protein is Receptor like protein kinase S.3 (LECRKS3).